Reading from the N-terminus, the 449-residue chain is Phosphoribosylamine--glycine ligase (449 aa).

Positions Arg112–Glu325 constitute an ATP-grasp domain. Ile139–Thr202 is a binding site for ATP. Residues Gln283, Glu295, and Asn297 each contribute to the Mg(2+) site. Mn(2+)-binding residues include Gln283, Glu295, and Asn297.

This sequence belongs to the GARS family. The cofactor is Mg(2+). Requires Mn(2+) as cofactor.

The catalysed reaction is 5-phospho-beta-D-ribosylamine + glycine + ATP = N(1)-(5-phospho-beta-D-ribosyl)glycinamide + ADP + phosphate + H(+). Its pathway is purine metabolism; IMP biosynthesis via de novo pathway; N(1)-(5-phospho-D-ribosyl)glycinamide from 5-phospho-alpha-D-ribose 1-diphosphate: step 2/2. The chain is Phosphoribosylamine--glycine ligase from Methanopyrus kandleri (strain AV19 / DSM 6324 / JCM 9639 / NBRC 100938).